A 505-amino-acid chain; its full sequence is Histidine ammonia-lyase (505 aa).

The segment at residues A141–G143 is a cross-link (5-imidazolinone (Ala-Gly)). S142 bears the 2,3-didehydroalanine (Ser) mark.

This sequence belongs to the PAL/histidase family. Contains an active site 4-methylidene-imidazol-5-one (MIO), which is formed autocatalytically by cyclization and dehydration of residues Ala-Ser-Gly.

The protein localises to the cytoplasm. It carries out the reaction L-histidine = trans-urocanate + NH4(+). It functions in the pathway amino-acid degradation; L-histidine degradation into L-glutamate; N-formimidoyl-L-glutamate from L-histidine: step 1/3. This Bacillus mycoides (strain KBAB4) (Bacillus weihenstephanensis) protein is Histidine ammonia-lyase.